The chain runs to 506 residues: ATP synthase subunit alpha, chloroplastic (506 aa).

170 to 177 (GDRQTGKT) contacts ATP. The residue at position 257 (threonine 257) is a Phosphothreonine.

Belongs to the ATPase alpha/beta chains family. F-type ATPases have 2 components, CF(1) - the catalytic core - and CF(0) - the membrane proton channel. CF(1) has five subunits: alpha(3), beta(3), gamma(1), delta(1), epsilon(1). CF(0) has four main subunits: a, b, b' and c.

It localises to the plastid. Its subcellular location is the chloroplast thylakoid membrane. The enzyme catalyses ATP + H2O + 4 H(+)(in) = ADP + phosphate + 5 H(+)(out). Functionally, produces ATP from ADP in the presence of a proton gradient across the membrane. The alpha chain is a regulatory subunit. The protein is ATP synthase subunit alpha, chloroplastic of Olimarabidopsis pumila (Dwarf rocket).